Consider the following 239-residue polypeptide: Type III pantothenate kinase (239 aa).

6–13 (DAGNTRLK) lines the ATP pocket. Residues Tyr87 and 94-97 (GADR) contribute to the substrate site. The active-site Proton acceptor is Asp96. Thr119 contributes to the ATP binding site. Ser169 provides a ligand contact to substrate.

Belongs to the type III pantothenate kinase family. In terms of assembly, homodimer. It depends on NH4(+) as a cofactor. The cofactor is K(+).

It is found in the cytoplasm. It carries out the reaction (R)-pantothenate + ATP = (R)-4'-phosphopantothenate + ADP + H(+). The protein operates within cofactor biosynthesis; coenzyme A biosynthesis; CoA from (R)-pantothenate: step 1/5. Catalyzes the phosphorylation of pantothenate (Pan), the first step in CoA biosynthesis. The chain is Type III pantothenate kinase from Laribacter hongkongensis (strain HLHK9).